Consider the following 124-residue polypeptide: MHALGRHIIAELYGCDKEVLNNRELIEKIMVESALKAGAEVREVAFHKFSPQGVSGVVVISESHLTIHTWPELGYAAVDVFTCGERVDPWQACNYITEMLKASHMTTTEVKRGLFEQPVKVANL.

The active-site Schiff-base intermediate with substrate; via pyruvic acid is serine 63. At serine 63 the chain carries Pyruvic acid (Ser); by autocatalysis. Histidine 68 acts as the Proton acceptor; for processing activity in catalysis. Catalysis depends on cysteine 83, which acts as the Proton donor; for catalytic activity.

The protein belongs to the prokaryotic AdoMetDC family. Type 1 subfamily. In terms of assembly, heterotetramer of two alpha and two beta chains arranged as a dimer of alpha/beta heterodimers. Requires pyruvate as cofactor. Post-translationally, is synthesized initially as an inactive proenzyme. Formation of the active enzyme involves a self-maturation process in which the active site pyruvoyl group is generated from an internal serine residue via an autocatalytic post-translational modification. Two non-identical subunits are generated from the proenzyme in this reaction, and the pyruvate is formed at the N-terminus of the alpha chain, which is derived from the carboxyl end of the proenzyme. The post-translation cleavage follows an unusual pathway, termed non-hydrolytic serinolysis, in which the side chain hydroxyl group of the serine supplies its oxygen atom to form the C-terminus of the beta chain, while the remainder of the serine residue undergoes an oxidative deamination to produce ammonia and the pyruvoyl group blocking the N-terminus of the alpha chain.

The enzyme catalyses S-adenosyl-L-methionine + H(+) = S-adenosyl 3-(methylsulfanyl)propylamine + CO2. Its pathway is amine and polyamine biosynthesis; S-adenosylmethioninamine biosynthesis; S-adenosylmethioninamine from S-adenosyl-L-methionine: step 1/1. In terms of biological role, catalyzes the decarboxylation of S-adenosylmethionine to S-adenosylmethioninamine (dcAdoMet), the propylamine donor required for the synthesis of the polyamines spermine and spermidine from the diamine putrescine. The sequence is that of S-adenosylmethionine decarboxylase proenzyme from Caldicellulosiruptor bescii (strain ATCC BAA-1888 / DSM 6725 / KCTC 15123 / Z-1320) (Anaerocellum thermophilum).